Here is a 71-residue protein sequence, read N- to C-terminus: uncharacterized protein (71 aa).

Positions 1-19 are cleaved as a signal peptide; that stretch reads MFLFPSLLSSFCITLRSIS.

This is an uncharacterized protein from Pasteurella multocida (strain Pm70).